We begin with the raw amino-acid sequence, 155 residues long: Large ribosomal subunit protein eL24 (155 aa).

The segment covering 94–129 (RSLKPEVRKAQRDEKKKADKEKKKADKAARKSEKAK) has biased composition (basic and acidic residues). Residues 94 to 155 (RSLKPEVRKA…AFQKVAATSR (62 aa)) are disordered.

It belongs to the eukaryotic ribosomal protein eL24 family.

This Kluyveromyces lactis (strain ATCC 8585 / CBS 2359 / DSM 70799 / NBRC 1267 / NRRL Y-1140 / WM37) (Yeast) protein is Large ribosomal subunit protein eL24 (RPL24).